The sequence spans 142 residues: Hemoglobin subunit theta-1 (142 aa).

Residues 2 to 142 (ALSAEDRALV…VISALASEYR (141 aa)) form the Globin domain. Heme b contacts are provided by His59 and His88.

Belongs to the globin family.

The protein is Hemoglobin subunit theta-1 (HBQ1) of Pongo pygmaeus (Bornean orangutan).